A 412-amino-acid chain; its full sequence is Serine hydroxymethyltransferase (412 aa).

Residues Leu-117 and 121–123 each bind (6S)-5,6,7,8-tetrahydrofolate; that span reads GHL. Lys-226 bears the N6-(pyridoxal phosphate)lysine mark. Residues Glu-242 and 350-352 each bind (6S)-5,6,7,8-tetrahydrofolate; that span reads SPF.

This sequence belongs to the SHMT family. As to quaternary structure, homodimer. Pyridoxal 5'-phosphate is required as a cofactor.

It localises to the cytoplasm. The enzyme catalyses (6R)-5,10-methylene-5,6,7,8-tetrahydrofolate + glycine + H2O = (6S)-5,6,7,8-tetrahydrofolate + L-serine. It participates in one-carbon metabolism; tetrahydrofolate interconversion. Its pathway is amino-acid biosynthesis; glycine biosynthesis; glycine from L-serine: step 1/1. In terms of biological role, catalyzes the reversible interconversion of serine and glycine with tetrahydrofolate (THF) serving as the one-carbon carrier. Also exhibits THF-independent aldolase activity toward beta-hydroxyamino acids, producing glycine and aldehydes, via a retro-aldol mechanism. The protein is Serine hydroxymethyltransferase of Methanosarcina mazei (strain ATCC BAA-159 / DSM 3647 / Goe1 / Go1 / JCM 11833 / OCM 88) (Methanosarcina frisia).